The sequence spans 428 residues: Enolase (428 aa).

A (2R)-2-phosphoglycerate-binding site is contributed by glutamine 163. Glutamate 205 serves as the catalytic Proton donor. Residues aspartate 242, glutamate 285, and aspartate 312 each contribute to the Mg(2+) site. Residues lysine 337, arginine 366, serine 367, and lysine 388 each coordinate (2R)-2-phosphoglycerate. Lysine 337 (proton acceptor) is an active-site residue.

This sequence belongs to the enolase family. It depends on Mg(2+) as a cofactor.

Its subcellular location is the cytoplasm. The protein localises to the secreted. It is found in the cell surface. It catalyses the reaction (2R)-2-phosphoglycerate = phosphoenolpyruvate + H2O. It functions in the pathway carbohydrate degradation; glycolysis; pyruvate from D-glyceraldehyde 3-phosphate: step 4/5. Its function is as follows. Catalyzes the reversible conversion of 2-phosphoglycerate (2-PG) into phosphoenolpyruvate (PEP). It is essential for the degradation of carbohydrates via glycolysis. In Neisseria meningitidis serogroup C / serotype 2a (strain ATCC 700532 / DSM 15464 / FAM18), this protein is Enolase.